Reading from the N-terminus, the 262-residue chain is Phosphatidylglycerol--prolipoprotein diacylglyceryl transferase (262 aa).

Helical transmembrane passes span 9-29 (LGPL…ILAV), 41-61 (IIPD…ILGA), 80-100 (IFAI…GALV), and 109-129 (LINT…AQSL). Arginine 131 is an a 1,2-diacyl-sn-glycero-3-phospho-(1'-sn-glycerol) binding site. 3 helical membrane passes run 167 to 187 (QPTF…ILIF), 197 to 217 (GHIT…IEGM), and 226 to 246 (GLRV…MIVI).

Belongs to the Lgt family.

The protein localises to the cell membrane. It carries out the reaction L-cysteinyl-[prolipoprotein] + a 1,2-diacyl-sn-glycero-3-phospho-(1'-sn-glycerol) = an S-1,2-diacyl-sn-glyceryl-L-cysteinyl-[prolipoprotein] + sn-glycerol 1-phosphate + H(+). The protein operates within protein modification; lipoprotein biosynthesis (diacylglyceryl transfer). In terms of biological role, catalyzes the transfer of the diacylglyceryl group from phosphatidylglycerol to the sulfhydryl group of the N-terminal cysteine of a prolipoprotein, the first step in the formation of mature lipoproteins. The protein is Phosphatidylglycerol--prolipoprotein diacylglyceryl transferase of Streptococcus pneumoniae (strain ATCC 700669 / Spain 23F-1).